The chain runs to 734 residues: Protein arginine N-methyltransferase 5 (734 aa).

Polar residues predominate over residues methionine 1–alanine 16. A disordered region spans residues methionine 1–serine 39. The span at serine 24 to serine 39 shows a compositional bias: low complexity. The tract at residues glutamate 42–valine 329 is TIM barrel. The region spanning leucine 360 to tryptophan 706 is the SAM-dependent MTase PRMT-type domain. An S-adenosyl-L-methionine-binding site is contributed by tyrosine 376. Position 379 (phenylalanine 379) interacts with a protein. S-adenosyl-L-methionine is bound by residues lysine 385 to tyrosine 386, glutamate 450, and aspartate 477 to methionine 478. Residues glutamate 499 and glutamate 508 each contribute to the a protein site. Residues glutamate 499 and glutamate 508 each act as proton donor/acceptor in the active site. The tract at residues proline 529 to methionine 734 is beta barrel. The tract at residues serine 541 to methionine 589 is dimerization.

The protein belongs to the class I-like SAM-binding methyltransferase superfamily. Protein arginine N-methyltransferase family. In terms of assembly, homodimer. Interacts with cep-1 (via C-terminus domain); does not methylate cep-1. Interacts with cbp-1 (via N-terminus domain and HAT domain); the interaction results in methylation of cbp-1. Component of a complex that contains cep-1 and cbp-1. May interact with pid-2, pid-4 and pid-5.

The protein resides in the nucleus. The catalysed reaction is L-arginyl-[protein] + 2 S-adenosyl-L-methionine = N(omega),N(omega)'-dimethyl-L-arginyl-[protein] + 2 S-adenosyl-L-homocysteine + 2 H(+). Catalyzes the symmetrical dimethylation of arginine residues in targets such as small nuclear ribonucleoproteins, histone H2A/H4 and cbp-1. Dimethylation occurs in a distributive manner where the protein is released after the addition of the first methyl group prior to rebinding for the addition of the second methyl group. Plays a role in the negative regulation of DNA damage-induced apoptosis. By methylating cbp-1, may prevent apoptosis by repressing the capacity of cbp-1 to enhance cep-1 dependent transcription activation of the programmed cell death activator egl-1. Plays a role in heat and oxidative stress resistance. The protein is Protein arginine N-methyltransferase 5 of Caenorhabditis elegans.